Reading from the N-terminus, the 358-residue chain is Heavy metal-associated isoprenylated plant protein 37 (358 aa).

The HMA domain maps to 12–75 (IQTFSLRVNI…KLVKAGKHAE (64 aa)). A metal cation is bound by residues Cys23 and Cys26. 2 disordered regions span residues 100–194 (QKGQ…QNTQ) and 332–358 (QQQSSHSHATNMSSEEDAGNNNSCNIM). Positions 128-141 (AEEDGDGSEEEDGD) are enriched in acidic residues. Positions 148 to 181 (ANQQQQQNVVNAKKNSGGAAMNNGNNGVNAASKK) are enriched in low complexity. 2 stretches are compositionally biased toward polar residues: residues 184–194 (QKQSNHNQNTQ) and 339–358 (HATNMSSEEDAGNNNSCNIM). Residue Cys355 is modified to Cysteine methyl ester. A lipid anchor (S-farnesyl cysteine) is attached at Cys355. Residues 356-358 (NIM) constitute a propeptide, removed in mature form.

The protein belongs to the HIPP family.

Its function is as follows. Heavy-metal-binding protein. In Arabidopsis thaliana (Mouse-ear cress), this protein is Heavy metal-associated isoprenylated plant protein 37.